The following is a 238-amino-acid chain: Ribosomal RNA small subunit methyltransferase G (238 aa).

Residues glycine 77, phenylalanine 82, 128-129 (AE), and arginine 147 contribute to the S-adenosyl-L-methionine site.

Belongs to the methyltransferase superfamily. RNA methyltransferase RsmG family.

The protein localises to the cytoplasm. Its function is as follows. Specifically methylates the N7 position of guanine in position 535 of 16S rRNA. The polypeptide is Ribosomal RNA small subunit methyltransferase G (Listeria monocytogenes serotype 4b (strain F2365)).